We begin with the raw amino-acid sequence, 310 residues long: Small ribosomal subunit biogenesis GTPase RsgA (310 aa).

In terms of domain architecture, CP-type G spans 77-238 (LSKQSHILAA…IIDTPGIKGF (162 aa)). GTP contacts are provided by residues 126 to 129 (NKVD) and 180 to 188 (GHSGVGKST). Positions 262, 267, 269, and 275 each coordinate Zn(2+).

Belongs to the TRAFAC class YlqF/YawG GTPase family. RsgA subfamily. As to quaternary structure, monomer. Associates with 30S ribosomal subunit, binds 16S rRNA. Requires Zn(2+) as cofactor.

It is found in the cytoplasm. Functionally, one of several proteins that assist in the late maturation steps of the functional core of the 30S ribosomal subunit. Helps release RbfA from mature subunits. May play a role in the assembly of ribosomal proteins into the subunit. Circularly permuted GTPase that catalyzes slow GTP hydrolysis, GTPase activity is stimulated by the 30S ribosomal subunit. The chain is Small ribosomal subunit biogenesis GTPase RsgA from Bacteroides fragilis (strain YCH46).